The sequence spans 876 residues: Alanine--tRNA ligase (876 aa).

The residue at position 74 (lysine 74) is an N6-acetyllysine. Residues histidine 564, histidine 568, cysteine 666, and histidine 670 each contribute to the Zn(2+) site.

It belongs to the class-II aminoacyl-tRNA synthetase family. As to quaternary structure, homotetramer. The cofactor is Zn(2+).

Its subcellular location is the cytoplasm. It catalyses the reaction tRNA(Ala) + L-alanine + ATP = L-alanyl-tRNA(Ala) + AMP + diphosphate. Functionally, catalyzes the attachment of alanine to tRNA(Ala) in a two-step reaction: alanine is first activated by ATP to form Ala-AMP and then transferred to the acceptor end of tRNA(Ala). Also edits incorrectly charged Ser-tRNA(Ala) and Gly-tRNA(Ala) via its editing domain. This Escherichia coli O9:H4 (strain HS) protein is Alanine--tRNA ligase.